A 397-amino-acid chain; its full sequence is Tryptophan synthase beta chain (397 aa).

An N6-(pyridoxal phosphate)lysine modification is found at K91.

The protein belongs to the TrpB family. As to quaternary structure, tetramer of two alpha and two beta chains. Pyridoxal 5'-phosphate is required as a cofactor.

The catalysed reaction is (1S,2R)-1-C-(indol-3-yl)glycerol 3-phosphate + L-serine = D-glyceraldehyde 3-phosphate + L-tryptophan + H2O. The protein operates within amino-acid biosynthesis; L-tryptophan biosynthesis; L-tryptophan from chorismate: step 5/5. The beta subunit is responsible for the synthesis of L-tryptophan from indole and L-serine. The polypeptide is Tryptophan synthase beta chain (Bacillus anthracis (strain A0248)).